The following is a 270-amino-acid chain: MLRKVFYISDGTAITAEVFGHAVLSQFPVEFDALTIPFVETEAKAHDVKLQINDCFITTGERPLVFHSIVKAEIRDIIYSSEGLDYDFLNTFVAPLELQLGMKASPVVHRTHGKANEGYEARIDAINYTMDNDDGQTLKNIDKADLVLLGVSRCGKTPSSLYLSMQFGIKAANYPFVEDDMDNLKLPTALKENKSKLFGLTIDPVRLHEIRKSRMDNSRYSSLRQCRIEVKEVEMMYKRERIPFVNTTNHSVEEIATKILDVTGLERHMF.

150–157 contacts ADP; that stretch reads GVSRCGKT.

The protein belongs to the pyruvate, phosphate/water dikinase regulatory protein family. PSRP subfamily.

The enzyme catalyses [pyruvate, water dikinase] + ADP = [pyruvate, water dikinase]-phosphate + AMP + H(+). It carries out the reaction [pyruvate, water dikinase]-phosphate + phosphate + H(+) = [pyruvate, water dikinase] + diphosphate. Its function is as follows. Bifunctional serine/threonine kinase and phosphorylase involved in the regulation of the phosphoenolpyruvate synthase (PEPS) by catalyzing its phosphorylation/dephosphorylation. This chain is Putative phosphoenolpyruvate synthase regulatory protein, found in Shewanella sediminis (strain HAW-EB3).